Here is a 496-residue protein sequence, read N- to C-terminus: Probable malate:quinone oxidoreductase (496 aa).

It belongs to the MQO family. FAD serves as cofactor.

It carries out the reaction (S)-malate + a quinone = a quinol + oxaloacetate. It participates in carbohydrate metabolism; tricarboxylic acid cycle; oxaloacetate from (S)-malate (quinone route): step 1/1. In Prochlorococcus marinus (strain NATL2A), this protein is Probable malate:quinone oxidoreductase.